The chain runs to 607 residues: MDNLSDTLKKLKITAADRTEGSLEGCLDCLLQALAQNNAETSEKIQGSGILQLFANLLTPQASCTAKVADIIAEVAKNEFMRIPCVDAGLISPLVQLLNSKDQEVLLQTGRALGNICYDSHEGRSAVDQAGGAQIVIDHLRSLCGRTDPASEKLMTVFCGMLMNYSNENDSLQAQLISMGVIPTLVKLLGIHCHNAALTEMCLVAFGNLAELESSKEQFASTNIAEELVKLFKKQIEHDKREMIFEVLAPLAENDAIKLQLVEAGLVECLLEIVQQKVDSNKEDDVAELKTASDLMVLLLLGDESMQKLFEGGKGSVFQRVLSWIPSNNHQLQLAGALAIANFARNDGNCIHMVDNGIVEKLMDLLDRHVEDGNVTVQHAALSALRNLAIPVVNKAKMLSAGVTETVLKFLKSEMPPVQFKLLGTLRMLIDAQAEAAEQLGKNAKLVERLVEWCEAKDHAGVMGESNRLLSALIRHSKSKDVIKTIVQSGGIKHLVTMATSEHVIMQNEALVALALIAALELGPAEKDLASAQLVQILHRLLADERSAPEIKYNSMVLICALMGSESLYKEVQDLAFLDVVSKLRSHENKSVAQQASLTEQRLTVES.

ARM repeat units lie at residues 89-131 and 170-211; these read GLIS…DQAG and DSLQ…NLAE. The interval 122–170 is prevents binding to prenylated RHOA; sequence EGRSAVDQAGGAQIVIDHLRSLCGRTDPASEKLMTVFCGMLMNYSNEND. Residue Lys-230 is modified to N6-acetyllysine. ARM repeat units lie at residues 347 to 390, 391 to 431, and 479 to 519; these read DGNC…NLAI, PVVN…MLID, and SKDV…LIAA.

Interacts with RABL3. Interacts with RHOT1. As to quaternary structure, interacts with unprenylated RHOA; the interaction is direct. Interacts with RAP1A. Interacts with KRAS. Interacts with RAC1. Interacts with RAP1B. Preferentially interacts with unprenylated GTPases that will become geranylgeranylated. May also interact with prenylated GTPases. In terms of assembly, interacts with prenylated RHOA; the interaction is direct and in a 1:1 stoichiometry. Interacts with RAP1A. Interacts with KRAS. Interacts with RAC1. Interacts with RAP1B. Preferentially interacts with prenylated GTPases. In terms of processing, serotonylated on Gln residues by TGM2 in response to hypoxia, leading to its inactivation.

It localises to the cytoplasm. Its subcellular location is the cytosol. The protein resides in the endoplasmic reticulum. It is found in the mitochondrion. The protein localises to the nucleus. Functionally, acts as a GEF (guanine nucleotide exchange factor) for the Rho family of small GTP-binding proteins (G proteins) that stimulates the dissociation of GDP to enable subsequent binding of GTP. Additionally, appears to chaperone the processing and/or trafficking of small GTPases containing a C-terminal polybasic region independently of GEF activity. Targets include RAP1A/RAP1B, RHOA, RHOB, RHOC, RAC1 and KRAS. Regulates mitochondrial dynamics by controlling RHOT function to promote mitochondrial fission during high calcium conditions. Able to promote the Ca(2+) release from the endoplasmic reticulum via both inositol trisphosphate (Ins3P) and ryanodine sensitive receptors leading to a enhanced mitochondrial Ca(2+) uptake. Acts as a GEF (guanine nucleotide exchange factor) for unprenylated RHOA. Chaperones the entry and passage of small GTPases through the prenylation pathway. Recognizes the last amino acid in the GTPase C-terminal CAAX motif with a preference for 'Leu' over 'Met', indicating involvement in the geranylgeranylation pathway. May also recognize prenylated GTPases. In terms of biological role, acts as a GEF (guanine nucleotide exchange factor) for prenylated RHOA. Acts as a GEF for RHOC. Chaperones the downstream trafficking and/or processing of small newly prenylated GTPases. Escorts RAC1 to the nucleus. The sequence is that of Rap1 GTPase-GDP dissociation stimulator 1 from Mus musculus (Mouse).